The following is a 619-amino-acid chain: Enolase 4 (619 aa).

A compositionally biased stretch (basic and acidic residues) spans D173–E184. The disordered stretch occupies residues D173–H236. Positions P188–P206 are enriched in pro residues. E302 is a substrate binding site. The interval T333–P354 is disordered. Catalysis depends on K497, which acts as the Proton acceptor. Position 548 (K548) interacts with substrate.

This sequence belongs to the enolase family. As to quaternary structure, interacts with ENO1. Isoform 1 and isoform 4 interact with AKAP4. Post-translationally, synthesized as an approximately 70-kDa precursor, which then undergoes proteolytic cleavage to an approximately 60-kDa enzyme; HOATZ associates directly or indirectly with ENO4 to mediate this process before its transport to mature flagella. Testis-specific. Expressed in spermatids and ependyma (at protein level). In terms of tissue distribution, expressed at higher levels in late spermatids than in pachytene spermatocytes. As to expression, expressed at higher levels in pachytene spermatocytes than in late spermatids.

The enzyme catalyses (2R)-2-phosphoglycerate = phosphoenolpyruvate + H2O. It functions in the pathway carbohydrate degradation; glycolysis; pyruvate from D-glyceraldehyde 3-phosphate: step 4/5. Functionally, required for sperm motility, function and male fertility. May be involved in the normal assembly of the sperm fibrous sheath and provides most of the enolase activity in sperm. This chain is Enolase 4 (Eno4), found in Mus musculus (Mouse).